The primary structure comprises 183 residues: Ubiquitin-conjugating enzyme E2 6 (183 aa).

One can recognise a UBC core domain in the interval Met1 to Lys148. Cys85 (glycyl thioester intermediate) is an active-site residue. A disordered region spans residues Lys148–Pro183. Over residues Ile152–Glu176 the composition is skewed to acidic residues.

Belongs to the ubiquitin-conjugating enzyme family. As to expression, expressed in roots, petals, sepals and silique walls.

It carries out the reaction S-ubiquitinyl-[E1 ubiquitin-activating enzyme]-L-cysteine + [E2 ubiquitin-conjugating enzyme]-L-cysteine = [E1 ubiquitin-activating enzyme]-L-cysteine + S-ubiquitinyl-[E2 ubiquitin-conjugating enzyme]-L-cysteine.. It functions in the pathway protein modification; protein ubiquitination. Accepts the ubiquitin from the E1 complex and catalyzes its covalent attachment to other proteins. This is Ubiquitin-conjugating enzyme E2 6 (UBC6) from Arabidopsis thaliana (Mouse-ear cress).